Reading from the N-terminus, the 416-residue chain is Gap junction alpha-3 protein (416 aa).

An intramembrane segment occupies 2–15 (GDWSFLGRLLENAQ). Topologically, residues 16 to 19 (EHST) are cytoplasmic. A helical membrane pass occupies residues 20–40 (VIGKVWLTVLFIFRILVLGAA). Topologically, residues 41–71 (AEEVWGDEQSDFTCNTQQPGCENVCYDRAFP) are extracellular. Intrachain disulfides connect cysteine 54–cysteine 198, cysteine 61–cysteine 192, and cysteine 65–cysteine 187. A helical membrane pass occupies residues 72–92 (ISHIRFWALQIIFVSTPTLIY). At 93–158 (LGHVLHIVRM…GALLRTYVFN (66 aa)) the chain is on the cytoplasmic side. Residues 110-128 (EEELLRRDNPQHGRGREPM) show a composition bias toward basic and acidic residues. Residues 110–141 (EEELLRRDNPQHGRGREPMRTGSPRDPPLRDD) are disordered. A helical membrane pass occupies residues 159–179 (IIFKTLFEVGFIAGQYFLYGF). The Extracellular portion of the chain corresponds to 180–207 (QLQPLYRCDRWPCPNTVDCFISRPTEKT). The helical transmembrane segment at 208–228 (IFVIFMLAVACASLVLNMLEI) threads the bilayer. Topologically, residues 229-416 (YHLGWKKLKQ…GRARPGDLAI (188 aa)) are cytoplasmic. Residues 336–416 (GAEPQTPASK…GRARPGDLAI (81 aa)) form a disordered region. Low complexity predominate over residues 342–353 (PASKPSSAASSP).

The protein belongs to the connexin family. Alpha-type (group II) subfamily. In terms of assembly, a hemichannel or connexon is composed of a hexamer of connexins. A functional gap junction is formed by the apposition of two hemichannels. Forms heteromeric channels with GJA8. As to expression, detected in eye lens (at protein level). Most abundant in lens, but also present in heart and kidney.

It is found in the cell membrane. The protein resides in the cell junction. Its subcellular location is the gap junction. Structural component of lens fiber gap junctions. Gap junctions are dodecameric channels that connect the cytoplasm of adjoining cells. They are formed by the docking of two hexameric hemichannels, one from each cell membrane. Small molecules and ions diffuse from one cell to a neighboring cell via the central pore. This chain is Gap junction alpha-3 protein (Gja3), found in Rattus norvegicus (Rat).